The chain runs to 202 residues: V-type ATP synthase subunit D (202 aa).

This sequence belongs to the V-ATPase D subunit family.

Its function is as follows. Produces ATP from ADP in the presence of a proton gradient across the membrane. This Borreliella burgdorferi (strain ATCC 35210 / DSM 4680 / CIP 102532 / B31) (Borrelia burgdorferi) protein is V-type ATP synthase subunit D (atpD).